A 313-amino-acid polypeptide reads, in one-letter code: tRNA-cytidine(32) 2-sulfurtransferase (313 aa).

A PP-loop motif motif is present at residues 47 to 52 (SGGKDS). [4Fe-4S] cluster contacts are provided by C122, C125, and C213. Residues 288–313 (PVGWQPEDDEDTEKRPPVRLDVLEIK) are disordered. Basic and acidic residues predominate over residues 299–313 (TEKRPPVRLDVLEIK).

The protein belongs to the TtcA family. As to quaternary structure, homodimer. Mg(2+) serves as cofactor. The cofactor is [4Fe-4S] cluster.

The protein localises to the cytoplasm. The enzyme catalyses cytidine(32) in tRNA + S-sulfanyl-L-cysteinyl-[cysteine desulfurase] + AH2 + ATP = 2-thiocytidine(32) in tRNA + L-cysteinyl-[cysteine desulfurase] + A + AMP + diphosphate + H(+). It participates in tRNA modification. Functionally, catalyzes the ATP-dependent 2-thiolation of cytidine in position 32 of tRNA, to form 2-thiocytidine (s(2)C32). The sulfur atoms are provided by the cysteine/cysteine desulfurase (IscS) system. The chain is tRNA-cytidine(32) 2-sulfurtransferase from Yersinia pseudotuberculosis serotype O:1b (strain IP 31758).